The primary structure comprises 229 residues: Potassium/proton antiporter CemA (229 aa).

3 consecutive transmembrane segments (helical) span residues 7 to 27 (FTPL…SLSF), 107 to 127 (ILHF…SLLG), and 189 to 209 (IISG…KYWI).

Belongs to the CemA family.

It is found in the plastid. It localises to the chloroplast inner membrane. It catalyses the reaction K(+)(in) + H(+)(out) = K(+)(out) + H(+)(in). Contributes to K(+)/H(+) antiport activity by supporting proton efflux to control proton extrusion and homeostasis in chloroplasts in a light-dependent manner to modulate photosynthesis. Prevents excessive induction of non-photochemical quenching (NPQ) under continuous-light conditions. Indirectly promotes efficient inorganic carbon uptake into chloroplasts. This Lactuca sativa (Garden lettuce) protein is Potassium/proton antiporter CemA.